Here is a 198-residue protein sequence, read N- to C-terminus: Type II secretion system protein J (198 aa).

A propeptide spans 1–7 (MIRRSSG) (leader sequence). Phe-8 is subject to N-methylphenylalanine. The helical transmembrane segment at 8-28 (FTLVEMLLALAILAALSVAAV) threads the bilayer.

This sequence belongs to the GSP J family. As to quaternary structure, type II secretion is composed of four main components: the outer membrane complex, the inner membrane complex, the cytoplasmic secretion ATPase and the periplasm-spanning pseudopilus. Interacts with core component PulG. Post-translationally, cleaved by prepilin peptidase. In terms of processing, methylated by prepilin peptidase at the amino group of the N-terminal phenylalanine once the leader sequence is cleaved by prepilin peptidase.

The protein resides in the cell inner membrane. Component of the type II secretion system required for the energy-dependent secretion of extracellular factors such as proteases and toxins from the periplasm. Part of the pseudopilus tip complex that is critical for the recognition and binding of secretion substrates. The chain is Type II secretion system protein J (pulJ) from Klebsiella pneumoniae.